The sequence spans 487 residues: Bifunctional protein GlmU (487 aa).

The segment at 1–240 (MAEVTNCAAI…PEELSGVNDR (240 aa)) is pyrophosphorylase. Residues 12–15 (LAAG), Lys-26, Gln-83, and 88–89 (GT) each bind UDP-N-acetyl-alpha-D-glucosamine. Mg(2+) is bound at residue Asp-113. Residues Gly-150, Glu-165, Asn-180, and Asn-238 each contribute to the UDP-N-acetyl-alpha-D-glucosamine site. Asn-238 is a Mg(2+) binding site. The tract at residues 241-261 (VQLAAAGRLLNRRMVEEAMRG) is linker. The N-acetyltransferase stretch occupies residues 262–487 (GTTIVDPDTT…DAKANDQTTN (226 aa)). 2 residues coordinate UDP-N-acetyl-alpha-D-glucosamine: Arg-343 and Lys-361. Catalysis depends on His-373, which acts as the Proton acceptor. Residues Tyr-376 and Asn-387 each contribute to the UDP-N-acetyl-alpha-D-glucosamine site. Residues Ala-390, 396–397 (NY), Ser-415, and Ala-433 contribute to the acetyl-CoA site. The segment at 449-487 (SGGKQRNIEGWVQKKRPGTPAAEAAGKAQDAKANDQTTN) is disordered.

In the N-terminal section; belongs to the N-acetylglucosamine-1-phosphate uridyltransferase family. It in the C-terminal section; belongs to the transferase hexapeptide repeat family. Homotrimer. Mg(2+) serves as cofactor.

Its subcellular location is the cytoplasm. The catalysed reaction is alpha-D-glucosamine 1-phosphate + acetyl-CoA = N-acetyl-alpha-D-glucosamine 1-phosphate + CoA + H(+). It carries out the reaction N-acetyl-alpha-D-glucosamine 1-phosphate + UTP + H(+) = UDP-N-acetyl-alpha-D-glucosamine + diphosphate. It participates in nucleotide-sugar biosynthesis; UDP-N-acetyl-alpha-D-glucosamine biosynthesis; N-acetyl-alpha-D-glucosamine 1-phosphate from alpha-D-glucosamine 6-phosphate (route II): step 2/2. It functions in the pathway nucleotide-sugar biosynthesis; UDP-N-acetyl-alpha-D-glucosamine biosynthesis; UDP-N-acetyl-alpha-D-glucosamine from N-acetyl-alpha-D-glucosamine 1-phosphate: step 1/1. The protein operates within bacterial outer membrane biogenesis; LPS lipid A biosynthesis. Its function is as follows. Catalyzes the last two sequential reactions in the de novo biosynthetic pathway for UDP-N-acetylglucosamine (UDP-GlcNAc). The C-terminal domain catalyzes the transfer of acetyl group from acetyl coenzyme A to glucosamine-1-phosphate (GlcN-1-P) to produce N-acetylglucosamine-1-phosphate (GlcNAc-1-P), which is converted into UDP-GlcNAc by the transfer of uridine 5-monophosphate (from uridine 5-triphosphate), a reaction catalyzed by the N-terminal domain. The sequence is that of Bifunctional protein GlmU from Corynebacterium aurimucosum (strain ATCC 700975 / DSM 44827 / CIP 107346 / CN-1) (Corynebacterium nigricans).